Consider the following 298-residue polypeptide: Protoheme IX farnesyltransferase (298 aa).

A run of 8 helical transmembrane segments spans residues 26–46 (IVIL…GGPP), 48–68 (LGLT…ANAI), 110–130 (FLVL…GLLF), 147–167 (IVIG…AVTG), 174–194 (VIMF…LALF), 220–240 (ILLY…TGTV), 243–263 (LYLW…VGLL), and 276–296 (TYGW…LDVT).

Belongs to the UbiA prenyltransferase family. Protoheme IX farnesyltransferase subfamily. Interacts with CtaA.

Its subcellular location is the cell membrane. It catalyses the reaction heme b + (2E,6E)-farnesyl diphosphate + H2O = Fe(II)-heme o + diphosphate. Its pathway is porphyrin-containing compound metabolism; heme O biosynthesis; heme O from protoheme: step 1/1. Converts heme B (protoheme IX) to heme O by substitution of the vinyl group on carbon 2 of heme B porphyrin ring with a hydroxyethyl farnesyl side group. The polypeptide is Protoheme IX farnesyltransferase (Symbiobacterium thermophilum (strain DSM 24528 / JCM 14929 / IAM 14863 / T)).